Here is a 251-residue protein sequence, read N- to C-terminus: 5'-nucleotidase SurE (251 aa).

Residues Asp8, Asp9, Ser39, and Asn91 each contribute to the a divalent metal cation site.

It belongs to the SurE nucleotidase family. A divalent metal cation serves as cofactor.

It localises to the cytoplasm. It catalyses the reaction a ribonucleoside 5'-phosphate + H2O = a ribonucleoside + phosphate. Functionally, nucleotidase that shows phosphatase activity on nucleoside 5'-monophosphates. The protein is 5'-nucleotidase SurE of Nitrosococcus oceani (strain ATCC 19707 / BCRC 17464 / JCM 30415 / NCIMB 11848 / C-107).